An 88-amino-acid polypeptide reads, in one-letter code: Small ribosomal subunit protein uS15 (88 aa).

It belongs to the universal ribosomal protein uS15 family. As to quaternary structure, part of the 30S ribosomal subunit. Forms a bridge to the 50S subunit in the 70S ribosome, contacting the 23S rRNA.

In terms of biological role, one of the primary rRNA binding proteins, it binds directly to 16S rRNA where it helps nucleate assembly of the platform of the 30S subunit by binding and bridging several RNA helices of the 16S rRNA. Its function is as follows. Forms an intersubunit bridge (bridge B4) with the 23S rRNA of the 50S subunit in the ribosome. The polypeptide is Small ribosomal subunit protein uS15 (Geobacter metallireducens (strain ATCC 53774 / DSM 7210 / GS-15)).